We begin with the raw amino-acid sequence, 120 residues long: Large ribosomal subunit protein bL19 (120 aa).

It belongs to the bacterial ribosomal protein bL19 family.

This protein is located at the 30S-50S ribosomal subunit interface and may play a role in the structure and function of the aminoacyl-tRNA binding site. In Chlorobium luteolum (strain DSM 273 / BCRC 81028 / 2530) (Pelodictyon luteolum), this protein is Large ribosomal subunit protein bL19.